The sequence spans 404 residues: Cysteine desulfurase IscS (404 aa).

Pyridoxal 5'-phosphate contacts are provided by residues Gly85 to Thr86, Asn165, Gln193, Ser213 to His215, and Thr251. Residue Cys338 is the Cysteine persulfide intermediate of the active site. A [2Fe-2S] cluster-binding site is contributed by Cys338.

It belongs to the class-V pyridoxal-phosphate-dependent aminotransferase family. NifS/IscS subfamily. Homodimer. Forms a heterotetramer with IscU, interacts with other sulfur acceptors. The cofactor is pyridoxal 5'-phosphate.

It localises to the cytoplasm. It catalyses the reaction (sulfur carrier)-H + L-cysteine = (sulfur carrier)-SH + L-alanine. It participates in cofactor biosynthesis; iron-sulfur cluster biosynthesis. In terms of biological role, master enzyme that delivers sulfur to a number of partners involved in Fe-S cluster assembly, tRNA modification or cofactor biosynthesis. Catalyzes the removal of elemental sulfur atoms from cysteine to produce alanine. Functions as a sulfur delivery protein for Fe-S cluster synthesis onto IscU, an Fe-S scaffold assembly protein, as well as other S acceptor proteins. The polypeptide is Cysteine desulfurase IscS (Methanosarcina thermophila).